The primary structure comprises 156 residues: Small ribosomal subunit protein uS7 (156 aa).

This sequence belongs to the universal ribosomal protein uS7 family. As to quaternary structure, part of the 30S ribosomal subunit. Contacts proteins S9 and S11.

Functionally, one of the primary rRNA binding proteins, it binds directly to 16S rRNA where it nucleates assembly of the head domain of the 30S subunit. Is located at the subunit interface close to the decoding center, probably blocks exit of the E-site tRNA. In Methylobacterium nodulans (strain LMG 21967 / CNCM I-2342 / ORS 2060), this protein is Small ribosomal subunit protein uS7.